The chain runs to 476 residues: Cytochrome c oxidase subunit 1 (476 aa).

A helical transmembrane segment spans residues 19–39 (LYYLWFSFLFGIYGFLLSVIL). Residue Glu-42 coordinates Ca(2+). 8 consecutive transmembrane segments (helical) span residues 61 to 81 (MIFT…GLFG), 105 to 125 (ISLL…AAEF), 144 to 164 (LSPV…IASI), 194 to 214 (LIIT…GVLM), 240 to 260 (LLWF…FGII), 278 to 298 (MILA…HHMY), 309 to 329 (FFTS…FNWL), and 345 to 365 (LLSL…VILG). A Fe(II)-heme a-binding site is contributed by His-66. His-246 lines the Cu cation pocket. The 1'-histidyl-3'-tyrosine (His-Tyr) cross-link spans 246–250 (HPEVY). Tyr-250 provides a ligand contact to O2. Residues His-295 and His-296 each contribute to the Cu cation site. Residues His-374 and Asp-375 each coordinate Mg(2+). 2 helical membrane-spanning segments follow: residues 379–399 (VIAH…FTSV) and 415–435 (TIIV…FLPM). Residue His-382 participates in heme a3 binding. Fe(II)-heme a is bound at residue His-384. Pro-448 contacts Ca(2+). Residues 455-475 (NGWNMICSIGSTMTLFGLLIF) traverse the membrane as a helical segment.

The protein belongs to the heme-copper respiratory oxidase family. As to quaternary structure, component of the cytochrome c oxidase (complex IV, CIV), a multisubunit enzyme composed of a catalytic core of 3 subunits and several supernumerary subunits. The complex exists as a monomer or a dimer and forms supercomplexes (SCs) in the inner mitochondrial membrane with ubiquinol-cytochrome c oxidoreductase (cytochrome b-c1 complex, complex III, CIII). Heme serves as cofactor. It depends on Cu cation as a cofactor.

The protein localises to the mitochondrion inner membrane. It catalyses the reaction 4 Fe(II)-[cytochrome c] + O2 + 8 H(+)(in) = 4 Fe(III)-[cytochrome c] + 2 H2O + 4 H(+)(out). It functions in the pathway energy metabolism; oxidative phosphorylation. In terms of biological role, component of the cytochrome c oxidase, the last enzyme in the mitochondrial electron transport chain which drives oxidative phosphorylation. The respiratory chain contains 3 multisubunit complexes succinate dehydrogenase (complex II, CII), ubiquinol-cytochrome c oxidoreductase (cytochrome b-c1 complex, complex III, CIII) and cytochrome c oxidase (complex IV, CIV), that cooperate to transfer electrons derived from NADH and succinate to molecular oxygen, creating an electrochemical gradient over the inner membrane that drives transmembrane transport and the ATP synthase. Cytochrome c oxidase is the component of the respiratory chain that catalyzes the reduction of oxygen to water. Electrons originating from reduced cytochrome c in the intermembrane space (IMS) are transferred via the dinuclear copper A center (CU(A)) of subunit 2 and heme A of subunit 1 to the active site in subunit 1, a binuclear center (BNC) formed by heme A3 and copper B (CU(B)). The BNC reduces molecular oxygen to 2 water molecules using 4 electrons from cytochrome c in the IMS and 4 protons from the mitochondrial matrix. The sequence is that of Cytochrome c oxidase subunit 1 (COI) from Plasmodium chabaudi.